Reading from the N-terminus, the 467-residue chain is Replication factor C large subunit (467 aa).

Residue 47 to 54 participates in ATP binding; it reads GPPGVGKT.

The protein belongs to the activator 1 small subunits family. RfcL subfamily. Heteromultimer composed of small subunits (RfcS) and large subunits (RfcL).

In terms of biological role, part of the RFC clamp loader complex which loads the PCNA sliding clamp onto DNA. This is Replication factor C large subunit from Methanothrix thermoacetophila (strain DSM 6194 / JCM 14653 / NBRC 101360 / PT) (Methanosaeta thermophila).